A 312-amino-acid chain; its full sequence is Pantothenate kinase (312 aa).

97 to 104 is a binding site for ATP; the sequence is GSVAVGKS.

The protein belongs to the prokaryotic pantothenate kinase family.

Its subcellular location is the cytoplasm. It catalyses the reaction (R)-pantothenate + ATP = (R)-4'-phosphopantothenate + ADP + H(+). Its pathway is cofactor biosynthesis; coenzyme A biosynthesis; CoA from (R)-pantothenate: step 1/5. The chain is Pantothenate kinase from Mycobacterium bovis (strain BCG / Pasteur 1173P2).